A 337-amino-acid polypeptide reads, in one-letter code: RNA 3'-terminal phosphate cyclase (337 aa).

ATP contacts are provided by residues Q101 and 282-285 (HMSD). Catalysis depends on H306, which acts as the Tele-AMP-histidine intermediate.

This sequence belongs to the RNA 3'-terminal cyclase family. Type 1 subfamily.

The protein resides in the cytoplasm. It carries out the reaction a 3'-end 3'-phospho-ribonucleotide-RNA + ATP = a 3'-end 2',3'-cyclophospho-ribonucleotide-RNA + AMP + diphosphate. Functionally, catalyzes the conversion of 3'-phosphate to a 2',3'-cyclic phosphodiester at the end of RNA. The mechanism of action of the enzyme occurs in 3 steps: (A) adenylation of the enzyme by ATP; (B) transfer of adenylate to an RNA-N3'P to produce RNA-N3'PP5'A; (C) and attack of the adjacent 2'-hydroxyl on the 3'-phosphorus in the diester linkage to produce the cyclic end product. The biological role of this enzyme is unknown but it is likely to function in some aspects of cellular RNA processing. The protein is RNA 3'-terminal phosphate cyclase of Saccharolobus islandicus (strain M.16.4 / Kamchatka #3) (Sulfolobus islandicus).